The chain runs to 199 residues: Putative pseudouridine methyltransferase (199 aa).

S-adenosyl-L-methionine is bound by residues L132 and C186.

This sequence belongs to the methyltransferase superfamily. TrmY family.

It localises to the cytoplasm. The polypeptide is Putative pseudouridine methyltransferase (Vibrio parahaemolyticus serotype O3:K6 (strain RIMD 2210633)).